We begin with the raw amino-acid sequence, 554 residues long: Arginine--tRNA ligase (554 aa).

The 'HIGH' region signature appears at 129 to 139 (ANPTGPLHIGH).

It belongs to the class-I aminoacyl-tRNA synthetase family. As to quaternary structure, monomer.

It is found in the cytoplasm. It carries out the reaction tRNA(Arg) + L-arginine + ATP = L-arginyl-tRNA(Arg) + AMP + diphosphate. The sequence is that of Arginine--tRNA ligase from Geobacter sp. (strain M21).